The chain runs to 616 residues: Dihydroxy-acid dehydratase (616 aa).

A Mg(2+)-binding site is contributed by Asp81. [2Fe-2S] cluster is bound at residue Cys122. Residues Asp123 and Lys124 each contribute to the Mg(2+) site. At Lys124 the chain carries N6-carboxylysine. Cys195 contributes to the [2Fe-2S] cluster binding site. Residue Glu491 participates in Mg(2+) binding. Catalysis depends on Ser517, which acts as the Proton acceptor.

The protein belongs to the IlvD/Edd family. Homodimer. [2Fe-2S] cluster serves as cofactor. Mg(2+) is required as a cofactor.

The catalysed reaction is (2R)-2,3-dihydroxy-3-methylbutanoate = 3-methyl-2-oxobutanoate + H2O. It carries out the reaction (2R,3R)-2,3-dihydroxy-3-methylpentanoate = (S)-3-methyl-2-oxopentanoate + H2O. It participates in amino-acid biosynthesis; L-isoleucine biosynthesis; L-isoleucine from 2-oxobutanoate: step 3/4. It functions in the pathway amino-acid biosynthesis; L-valine biosynthesis; L-valine from pyruvate: step 3/4. Functions in the biosynthesis of branched-chain amino acids. Catalyzes the dehydration of (2R,3R)-2,3-dihydroxy-3-methylpentanoate (2,3-dihydroxy-3-methylvalerate) into 2-oxo-3-methylpentanoate (2-oxo-3-methylvalerate) and of (2R)-2,3-dihydroxy-3-methylbutanoate (2,3-dihydroxyisovalerate) into 2-oxo-3-methylbutanoate (2-oxoisovalerate), the penultimate precursor to L-isoleucine and L-valine, respectively. This is Dihydroxy-acid dehydratase from Escherichia coli (strain SMS-3-5 / SECEC).